Consider the following 118-residue polypeptide: Large ribosomal subunit protein bL20 (118 aa).

The protein belongs to the bacterial ribosomal protein bL20 family.

In terms of biological role, binds directly to 23S ribosomal RNA and is necessary for the in vitro assembly process of the 50S ribosomal subunit. It is not involved in the protein synthesizing functions of that subunit. The sequence is that of Large ribosomal subunit protein bL20 from Francisella tularensis subsp. tularensis (strain FSC 198).